A 46-amino-acid polypeptide reads, in one-letter code: Large ribosomal subunit protein bL34c (46 aa).

The protein belongs to the bacterial ribosomal protein bL34 family.

The protein resides in the plastid. Its subcellular location is the chloroplast. This Guillardia theta (Cryptophyte) protein is Large ribosomal subunit protein bL34c (rpl34).